Reading from the N-terminus, the 29-residue chain is Pyridoxal 5'-phosphate synthase subunit PdxS (29 aa).

The protein belongs to the PdxS/SNZ family. As to quaternary structure, in the presence of PdxT, forms a dodecamer of heterodimers.

It carries out the reaction aldehydo-D-ribose 5-phosphate + D-glyceraldehyde 3-phosphate + L-glutamine = pyridoxal 5'-phosphate + L-glutamate + phosphate + 3 H2O + H(+). It participates in cofactor biosynthesis; pyridoxal 5'-phosphate biosynthesis. Functionally, catalyzes the formation of pyridoxal 5'-phosphate from ribose 5-phosphate (RBP), glyceraldehyde 3-phosphate (G3P) and ammonia. The ammonia is provided by the PdxT subunit. Can also use ribulose 5-phosphate and dihydroxyacetone phosphate as substrates, resulting from enzyme-catalyzed isomerization of RBP and G3P, respectively. In Clostridium pasteurianum, this protein is Pyridoxal 5'-phosphate synthase subunit PdxS.